The sequence spans 474 residues: ATP synthase subunit beta (474 aa).

Residue 158–165 (GGAGVGKT) participates in ATP binding.

Belongs to the ATPase alpha/beta chains family. As to quaternary structure, F-type ATPases have 2 components, CF(1) - the catalytic core - and CF(0) - the membrane proton channel. CF(1) has five subunits: alpha(3), beta(3), gamma(1), delta(1), epsilon(1). CF(0) has three main subunits: a(1), b(2) and c(9-12). The alpha and beta chains form an alternating ring which encloses part of the gamma chain. CF(1) is attached to CF(0) by a central stalk formed by the gamma and epsilon chains, while a peripheral stalk is formed by the delta and b chains.

The protein resides in the cell membrane. The enzyme catalyses ATP + H2O + 4 H(+)(in) = ADP + phosphate + 5 H(+)(out). Functionally, produces ATP from ADP in the presence of a proton gradient across the membrane. The catalytic sites are hosted primarily by the beta subunits. The sequence is that of ATP synthase subunit beta from Tropheryma whipplei (strain Twist) (Whipple's bacillus).